A 1012-amino-acid chain; its full sequence is Axonemal dynein light chain domain-containing protein 1 (1012 aa).

The segment covering 1-17 (MSLPKTPSTPLNSTSTS) has biased composition (low complexity). The disordered stretch occupies residues 1–34 (MSLPKTPSTPLNSTSTSESKKLKVSVAKEGTRGL). Coiled-coil stretches lie at residues 317–402 (QRIL…IWSS), 447–486 (EDLA…IVKD), and 572–597 (SERQ…RING). Over residues 841 to 854 (PEIDESFKEDEEES) the composition is skewed to acidic residues. Disordered stretches follow at residues 841–879 (PEID…TEKE) and 963–1012 (LEEL…KKGH). 2 stretches are compositionally biased toward basic and acidic residues: residues 855–879 (KEDR…TEKE) and 963–987 (LEEL…REVK). Residues 988-997 (EEEEQQEEEE) are compositionally biased toward acidic residues.

As to expression, highly expressed in testis. Highly expressed in the round and late spermatids.

It localises to the cytoplasm. Functionally, may be essential for spermiogenesis and male fertility probably by regulating the manchette dynamics, spermatid head shaping and sperm flagellum assembly. The sequence is that of Axonemal dynein light chain domain-containing protein 1 from Homo sapiens (Human).